A 695-amino-acid chain; its full sequence is MDRRRWVPSTPVVTLLLLFMLFAPAPRLPSRNGESSEKSIKAEKRAFSEIKNATFLNIPERVEHSLTFPTEIWETRDGLFEEPVGKGDSHLNHTSVMTGNWNILPYPSFGKVSPNVTWHTTLRNIVMSQSGRFSANLYEYVDGNSDGISFVLNLENNNDTSVYHMTFHGDRVKPINVFLGSTDVTPNFGGVDVIPWLLKDSPYKDAPPLDGTEYFPLLQNRSLERIETRLQDAQTVGWSPLVFEEEEVTCSAFVFLHNKNTGLDKETLKAIENEFYHPQGVSTQKMPEVFVSGLVYSPDCNVAFTFSNTKGPRNFVLENHLVRFSSLYIFIVLSQIFVLLRQMRINSPSHVQRLSFLTIAMQAGLDAYIAIFFLSTNAVIEKGYLPFVSVAFLSLVPSVMFTMRYLALILRVQNSNMPPPAPRPVTNNSSNNNTNQSNASNENSPNAPSAANDNTETTTVNPPQEDDQPMTQHERDQRDWSAVCLRFYFIILVVCIASLYSAFWPVIYRFYFISALIFTSYSFWIPQIIQNVKQGTSRSFTWTYILGASVLRLYLPLAIFIDSELILGFPPKYFFALGLVLWMLFQVLVLLVQDTLGPRFFLPKKFFLSSPVYDYHPVIQQDDLEAFMRDANVCPICMQPIELVSTGSTLNPASMMVRRNYMLTPCHHLYHRQCLLQWMETRSICPVCRCHLPAV.

Residues 1–25 form the signal peptide; that stretch reads MDRRRWVPSTPVVTLLLLFMLFAPA. The Lumenal segment spans residues 26-319; that stretch reads PRLPSRNGES…KGPRNFVLEN (294 aa). A helical membrane pass occupies residues 320-340; the sequence is HLVRFSSLYIFIVLSQIFVLL. Residues 341–353 are Cytoplasmic-facing; sequence RQMRINSPSHVQR. Residues 354-374 traverse the membrane as a helical segment; it reads LSFLTIAMQAGLDAYIAIFFL. Residues 375 to 382 lie on the Lumenal side of the membrane; it reads STNAVIEK. A helical transmembrane segment spans residues 383-403; it reads GYLPFVSVAFLSLVPSVMFTM. Over 404-486 the chain is Cytoplasmic; that stretch reads RYLALILRVQ…QRDWSAVCLR (83 aa). A disordered region spans residues 419–473; that stretch reads PPAPRPVTNNSSNNNTNQSNASNENSPNAPSAANDNTETTTVNPPQEDDQPMTQH. The span at 427–454 shows a compositional bias: low complexity; it reads NNSSNNNTNQSNASNENSPNAPSAANDN. Residues 487–507 form a helical membrane-spanning segment; it reads FYFIILVVCIASLYSAFWPVI. The Lumenal segment spans residues 508 to 509; sequence YR. The helical transmembrane segment at 510 to 530 threads the bilayer; the sequence is FYFISALIFTSYSFWIPQIIQ. Residues 531 to 540 are Cytoplasmic-facing; sequence NVKQGTSRSF. The helical transmembrane segment at 541-561 threads the bilayer; it reads TWTYILGASVLRLYLPLAIFI. Topologically, residues 562-572 are lumenal; it reads DSELILGFPPK. A helical membrane pass occupies residues 573 to 593; that stretch reads YFFALGLVLWMLFQVLVLLVQ. Residues 594 to 695 are Cytoplasmic-facing; sequence DTLGPRFFLP…PVCRCHLPAV (102 aa). An RING-type; atypical zinc finger spans residues 634–689; the sequence is CPICMQPIELVSTGSTLNPASMMVRRNYMLTPCHHLYHRQCLLQWMETRSICPVCR.

As to quaternary structure, component of the DSC E3 ubiquitin ligase complex composed of dsc1, dsc2, dsc3 and dsc4.

It localises to the endoplasmic reticulum membrane. Its subcellular location is the golgi apparatus membrane. It carries out the reaction S-ubiquitinyl-[E2 ubiquitin-conjugating enzyme]-L-cysteine + [acceptor protein]-L-lysine = [E2 ubiquitin-conjugating enzyme]-L-cysteine + N(6)-ubiquitinyl-[acceptor protein]-L-lysine.. The protein operates within protein modification; protein ubiquitination. In terms of biological role, catalytic component of the DSC E3 ubiquitin ligase complex which is required for the sre1 transcriptional activator proteolytic cleavage to release the soluble transcription factor from the membrane in low oxygen or sterol conditions. The complex also plays an important role in the multivesicular body (MVB) pathway and functions in a post-endoplasmic reticulum pathway for protein degradation. This is DSC E3 ubiquitin ligase complex subunit 1 (dsc1) from Schizosaccharomyces pombe (strain 972 / ATCC 24843) (Fission yeast).